The primary structure comprises 277 residues: Proteasome subunit beta type-7 (277 aa).

A propeptide spans 1–43 (MAAVSVYAPPVGGFSFDNCRRNAVLEADFAKRGYKLPKVRKTG) (removed in mature form). Thr-44 (nucleophile) is an active-site residue.

This sequence belongs to the peptidase T1B family. In terms of assembly, the 26S proteasome consists of a 20S proteasome core and two 19S regulatory subunits. The 20S proteasome core is a barrel-shaped complex made of 28 subunits that are arranged in four stacked rings. The two outer rings are each formed by seven alpha subunits, and the two inner rings are formed by seven beta subunits. The proteolytic activity is exerted by three beta-subunits PSMB5, PSMB6 and PSMB7. (Microbial infection) Interacts with HIV-1 Tat protein. As to expression, expressed at a low level in colonic mucosa. Up-regulated in colorectal cancer tissues.

Its subcellular location is the cytoplasm. It is found in the nucleus. The enzyme catalyses Cleavage of peptide bonds with very broad specificity.. Its function is as follows. Component of the 20S core proteasome complex involved in the proteolytic degradation of most intracellular proteins. This complex plays numerous essential roles within the cell by associating with different regulatory particles. Associated with two 19S regulatory particles, forms the 26S proteasome and thus participates in the ATP-dependent degradation of ubiquitinated proteins. The 26S proteasome plays a key role in the maintenance of protein homeostasis by removing misfolded or damaged proteins that could impair cellular functions, and by removing proteins whose functions are no longer required. Associated with the PA200 or PA28, the 20S proteasome mediates ubiquitin-independent protein degradation. This type of proteolysis is required in several pathways including spermatogenesis (20S-PA200 complex) or generation of a subset of MHC class I-presented antigenic peptides (20S-PA28 complex). Within the 20S core complex, PSMB7 displays a trypsin-like activity. The chain is Proteasome subunit beta type-7 from Homo sapiens (Human).